Here is a 462-residue protein sequence, read N- to C-terminus: L-seryl-tRNA(Sec) selenium transferase (462 aa).

At lysine 294 the chain carries N6-(pyridoxal phosphate)lysine.

This sequence belongs to the SelA family. Homodecamer; pentamer of dimers. Binds only one seryl-tRNA(Sec) per dimer. It depends on pyridoxal 5'-phosphate as a cofactor.

Its subcellular location is the cytoplasm. The enzyme catalyses L-seryl-tRNA(Sec) + selenophosphate + H(+) = L-selenocysteinyl-tRNA(Sec) + phosphate. It participates in aminoacyl-tRNA biosynthesis; selenocysteinyl-tRNA(Sec) biosynthesis; selenocysteinyl-tRNA(Sec) from L-seryl-tRNA(Sec) (bacterial route): step 1/1. Its function is as follows. Converts seryl-tRNA(Sec) to selenocysteinyl-tRNA(Sec) required for selenoprotein biosynthesis. This is L-seryl-tRNA(Sec) selenium transferase from Yersinia pestis bv. Antiqua (strain Antiqua).